The chain runs to 239 residues: Homeobox protein Nkx-2.8 (239 aa).

The segment covering 1–11 has biased composition (polar residues); the sequence is MATSGRLSFTV. Residues 1 to 87 are disordered; sequence MATSGRLSFT…GSDAEKRKKR (87 aa). Over residues 21–32 the composition is skewed to basic and acidic residues; sequence DAQHLPRREPEP. Over residues 62-79 the composition is skewed to low complexity; it reads SPPDSSQRPSARPASPGS. The homeobox DNA-binding region spans 84-143; the sequence is RKKRRVLFSKAQTLELERRFRQQRYLSAPEREQLASLLRLTPTQVKIWFQNHRYKLKRAR.

This sequence belongs to the NK-2 homeobox family.

It is found in the nucleus. The chain is Homeobox protein Nkx-2.8 (NKX2-8) from Homo sapiens (Human).